The following is a 398-amino-acid chain: Argininosuccinate synthase (398 aa).

9-17 (AYSGGLDTS) serves as a coordination point for ATP. Residue Tyr85 participates in L-citrulline binding. Residue Gly115 participates in ATP binding. Thr117, Asn121, and Asp122 together coordinate L-aspartate. Residue Asn121 participates in L-citrulline binding. Residues Arg125, Ser173, Glu258, and Tyr270 each contribute to the L-citrulline site.

This sequence belongs to the argininosuccinate synthase family. Type 1 subfamily. Homotetramer.

The protein resides in the cytoplasm. The catalysed reaction is L-citrulline + L-aspartate + ATP = 2-(N(omega)-L-arginino)succinate + AMP + diphosphate + H(+). It participates in amino-acid biosynthesis; L-arginine biosynthesis; L-arginine from L-ornithine and carbamoyl phosphate: step 2/3. The sequence is that of Argininosuccinate synthase from Streptococcus pneumoniae (strain ATCC BAA-255 / R6).